We begin with the raw amino-acid sequence, 491 residues long: Probable cytosol aminopeptidase (491 aa).

Mn(2+)-binding residues include lysine 261 and aspartate 266. Lysine 273 is an active-site residue. Positions 284, 343, and 345 each coordinate Mn(2+). Arginine 347 is a catalytic residue.

This sequence belongs to the peptidase M17 family. Requires Mn(2+) as cofactor.

Its subcellular location is the cytoplasm. The enzyme catalyses Release of an N-terminal amino acid, Xaa-|-Yaa-, in which Xaa is preferably Leu, but may be other amino acids including Pro although not Arg or Lys, and Yaa may be Pro. Amino acid amides and methyl esters are also readily hydrolyzed, but rates on arylamides are exceedingly low.. It catalyses the reaction Release of an N-terminal amino acid, preferentially leucine, but not glutamic or aspartic acids.. In terms of biological role, presumably involved in the processing and regular turnover of intracellular proteins. Catalyzes the removal of unsubstituted N-terminal amino acids from various peptides. The chain is Probable cytosol aminopeptidase from Stenotrophomonas maltophilia (strain K279a).